We begin with the raw amino-acid sequence, 562 residues long: Arginine--tRNA ligase (562 aa).

The 'HIGH' region motif lies at 130–140; that stretch reads ANPTGPLHIGH.

It belongs to the class-I aminoacyl-tRNA synthetase family. Monomer.

The protein localises to the cytoplasm. It catalyses the reaction tRNA(Arg) + L-arginine + ATP = L-arginyl-tRNA(Arg) + AMP + diphosphate. This chain is Arginine--tRNA ligase, found in Geobacter metallireducens (strain ATCC 53774 / DSM 7210 / GS-15).